A 282-amino-acid chain; its full sequence is NAD-dependent protein deacetylase 1 (282 aa).

In terms of domain architecture, Deacetylase sirtuin-type spans 1-282; the sequence is MTVGRAESPE…ADELSPLPTH (282 aa). Residues 25–45 and 101–104 contribute to the NAD(+) site; these read GAGI…SPPS and QNVD. Residue His119 is the Proton acceptor of the active site. The Zn(2+) site is built by Cys127, Cys130, Cys181, and Cys184. NAD(+)-binding positions include 221 to 223, 247 to 249, and Cys265; these read GSS and NRG.

The protein belongs to the sirtuin family. Class II subfamily. The cofactor is Zn(2+).

It localises to the cytoplasm. The catalysed reaction is N(6)-acetyl-L-lysyl-[protein] + NAD(+) + H2O = 2''-O-acetyl-ADP-D-ribose + nicotinamide + L-lysyl-[protein]. In terms of biological role, NAD-dependent protein deacetylase which modulates the activities of several enzymes which are inactive in their acetylated form. The sequence is that of NAD-dependent protein deacetylase 1 from Mycobacterium avium (strain 104).